Consider the following 149-residue polypeptide: UPF0179 protein TON_1048 (149 aa).

It belongs to the UPF0179 family.

The sequence is that of UPF0179 protein TON_1048 from Thermococcus onnurineus (strain NA1).